The sequence spans 344 residues: Heat-inducible transcription repressor HrcA (344 aa).

It belongs to the HrcA family.

Functionally, negative regulator of class I heat shock genes (grpE-dnaK-dnaJ and groELS operons). Prevents heat-shock induction of these operons. The chain is Heat-inducible transcription repressor HrcA from Aster yellows witches'-broom phytoplasma (strain AYWB).